Reading from the N-terminus, the 140-residue chain is Nucleoside diphosphate kinase (140 aa).

ATP contacts are provided by Lys11, Phe59, Arg87, Thr93, Arg104, and Asn114. The active-site Pros-phosphohistidine intermediate is the His117.

The protein belongs to the NDK family. In terms of assembly, homotetramer. Mg(2+) is required as a cofactor.

The protein resides in the cytoplasm. It carries out the reaction a 2'-deoxyribonucleoside 5'-diphosphate + ATP = a 2'-deoxyribonucleoside 5'-triphosphate + ADP. The enzyme catalyses a ribonucleoside 5'-diphosphate + ATP = a ribonucleoside 5'-triphosphate + ADP. Functionally, major role in the synthesis of nucleoside triphosphates other than ATP. The ATP gamma phosphate is transferred to the NDP beta phosphate via a ping-pong mechanism, using a phosphorylated active-site intermediate. The chain is Nucleoside diphosphate kinase from Ruegeria sp. (strain TM1040) (Silicibacter sp.).